The primary structure comprises 488 residues: Auxin transporter-like protein 1 (488 aa).

The tract at residues 1 to 36 (MSGEKQAEESIVVSGEDEVAGRKVEDSAAEEDIDGN) is disordered. The Cytoplasmic segment spans residues 1–64 (MSGEKQAEES…DAWFSCASNQ (64 aa)). A helical membrane pass occupies residues 65–82 (VAQVLLTLPYSFSQLGML). Over 83-84 (SG) the chain is Extracellular. Residues 85–105 (ILLQIFYGLMGSWTAYLISVL) form a helical membrane-spanning segment. The Cytoplasmic portion of the chain corresponds to 106-141 (YVEYRARMEKQEAKSFKNHVIQWFEVLDGLLGPYWK). Residues 142–162 (AAGLAFNCTFLLFGSVIQLIA) form a helical membrane-spanning segment. Residues 163–178 (CASNIYYINDRLDKRT) lie on the Extracellular side of the membrane. A helical membrane pass occupies residues 179-199 (WTYIFGACCATTVFIPSFHNY). At 200 to 202 (RIW) the chain is on the cytoplasmic side. Residues 203 to 223 (SFLGLGMTTYTAWYLTIASFL) traverse the membrane as a helical segment. Residues 224 to 238 (HGQAEGVTHSGPTKL) are Extracellular-facing. The chain crosses the membrane as a helical span at residues 239 to 259 (VLYFTGATNILYTFGGHAVTV). The Cytoplasmic portion of the chain corresponds to 260 to 273 (EIMHAMWKPRKFKS). A helical membrane pass occupies residues 274-294 (IYLMATLYVFTLTLPSASAVY). Over 295–320 (WAFGDQLLNHSNAFSLLPKTRFRDTA) the chain is Extracellular. N-linked (GlcNAc...) asparagine glycosylation is present at asparagine 303. The chain crosses the membrane as a helical span at residues 321-341 (VILMLIHQFITFGFACTPLYF). Topologically, residues 342–362 (VWEKAIGMHHTKSLCLRALVR) are cytoplasmic. Residues 363–383 (LPVVVPIWFLAIIFPFFGPIN) form a helical membrane-spanning segment. Serine 384 is a topological domain (extracellular). Residues 385–405 (AVGALLVTFTVYIIPALAHML) traverse the membrane as a helical segment. The Cytoplasmic portion of the chain corresponds to 406 to 427 (TYRTASARRNAAEKPPFFIPSW). The helical transmembrane segment at 428-448 (AGVYVINAFIVVWVLVLGFGF) threads the bilayer. Topologically, residues 449–488 (GGWASMTNFIRQIDTFGLFAKCYQCKPPPAPIAAGAHHRR) are extracellular.

Belongs to the amino acid/polyamine transporter 2 family. Amino acid/auxin permease (AAAP) (TC 2.A.18.1) subfamily.

The protein resides in the cell membrane. In terms of biological role, carrier protein involved in proton-driven auxin influx. Mediates the formation of auxin gradient from developing leaves (site of auxin biosynthesis) to tips by contributing to the loading of auxin in vascular tissues and facilitating acropetal (base to tip) auxin transport within inner tissues of the root apex, and basipetal (tip to base) auxin transport within outer tissues of the root apex. The chain is Auxin transporter-like protein 1 (LAX1) from Arabidopsis thaliana (Mouse-ear cress).